A 255-amino-acid polypeptide reads, in one-letter code: MWIGIISLFPEMFRAITDYGVTGRAVKNGLLSIQSWSPRDFTHDRHRIVDDRPYGGGPGMLMMVQPLRDAIHAAKAAAGEGAKVIYLSPQGRKLDQAGVSELATNQKLILVCGRYEGIDERVIQTEIDEEWSIGDYVLSGGELPAMTLIDSVSRFIPGVLGHEASATEDSFAEGLLDCPHYTRPEVLEGMEVPPVLLSGNHAEIRRWRLKQSLGRTWLRRPELLENLALTEEQARLLAEFKTEHAQQQHKHDGMA.

Residues glycine 113 and 133–138 each bind S-adenosyl-L-methionine; that span reads IGDYVL.

It belongs to the RNA methyltransferase TrmD family. In terms of assembly, homodimer.

The protein localises to the cytoplasm. The enzyme catalyses guanosine(37) in tRNA + S-adenosyl-L-methionine = N(1)-methylguanosine(37) in tRNA + S-adenosyl-L-homocysteine + H(+). Specifically methylates guanosine-37 in various tRNAs. In Escherichia coli O81 (strain ED1a), this protein is tRNA (guanine-N(1)-)-methyltransferase.